A 1056-amino-acid polypeptide reads, in one-letter code: RNA cytidine acetyltransferase (1056 aa).

286-295 (GRGKSAALGI) is an ATP binding site. Polar residues predominate over residues 433–446 (QNNTSGRESTQTAV). The interval 433–463 (QNNTSGRESTQTAVVSRDNKEKDSHLHSQSR) is disordered. Over residues 449–463 (RDNKEKDSHLHSQSR) the composition is skewed to basic and acidic residues. Arg475 contributes to the ATP binding site. In terms of domain architecture, N-acetyltransferase spans 566–706 (VLLPPIDPKD…VKLRDAKTLP (141 aa)). Acetyl-CoA-binding positions include 638–640 (IAT), 645–651 (ASMGYGS), and Asn739. 3 positions are modified to phosphoserine: Ser1001, Ser1007, and Ser1010.

Belongs to the RNA cytidine acetyltransferase family. NAT10 subfamily. As to quaternary structure, interacts with TAN1. Associates with 90S pre-ribosomal particles.

It is found in the nucleus. Its subcellular location is the nucleolus. It catalyses the reaction a cytidine in 18S rRNA + acetyl-CoA + ATP + H2O = an N(4)-acetylcytidine in 18S rRNA + ADP + phosphate + CoA + H(+). The catalysed reaction is a cytidine in tRNA + acetyl-CoA + ATP + H2O = an N(4)-acetylcytidine in tRNA + ADP + phosphate + CoA + H(+). Functionally, RNA cytidine acetyltransferase with specificity toward both 18S rRNA and tRNAs. Catalyzes the formation of N(4)-acetylcytidine (ac4C) at positions 1280 and 1773 in 18S rRNA. Required for early nucleolar cleavages of precursor rRNA at sites A0, A1 and A2 during 18S rRNA synthesis. Catalyzes the formation of ac4C at position 12 in serine and leucine tRNAs. Requires the tRNA-binding adapter protein TAN1 for full tRNA acetyltransferase activity but not for 18S rRNA acetylation. This Saccharomyces cerevisiae (strain ATCC 204508 / S288c) (Baker's yeast) protein is RNA cytidine acetyltransferase.